A 178-amino-acid chain; its full sequence is Protein GrpE (178 aa).

It belongs to the GrpE family. Homodimer.

Its subcellular location is the cytoplasm. Its function is as follows. Participates actively in the response to hyperosmotic and heat shock by preventing the aggregation of stress-denatured proteins, in association with DnaK and GrpE. It is the nucleotide exchange factor for DnaK and may function as a thermosensor. Unfolded proteins bind initially to DnaJ; upon interaction with the DnaJ-bound protein, DnaK hydrolyzes its bound ATP, resulting in the formation of a stable complex. GrpE releases ADP from DnaK; ATP binding to DnaK triggers the release of the substrate protein, thus completing the reaction cycle. Several rounds of ATP-dependent interactions between DnaJ, DnaK and GrpE are required for fully efficient folding. The sequence is that of Protein GrpE from Bordetella avium (strain 197N).